Here is a 195-residue protein sequence, read N- to C-terminus: Holliday junction branch migration complex subunit RuvA (195 aa).

The domain I stretch occupies residues 1–63; the sequence is MIASVRGEVL…EDSQTLYGFA (63 aa). The segment at 64-138 is domain II; that stretch reads DSDARDLFLT…DKVGSSTSSG (75 aa). The tract at residues 138–142 is flexible linker; it reads GVAAA. The interval 143-195 is domain III; sequence GGHGIRGPVVEALVGLGFAVKQAEEATDKVLANDPEATTSSALRAALSMLGKK.

Belongs to the RuvA family. In terms of assembly, homotetramer. Forms an RuvA(8)-RuvB(12)-Holliday junction (HJ) complex. HJ DNA is sandwiched between 2 RuvA tetramers; dsDNA enters through RuvA and exits via RuvB. An RuvB hexamer assembles on each DNA strand where it exits the tetramer. Each RuvB hexamer is contacted by two RuvA subunits (via domain III) on 2 adjacent RuvB subunits; this complex drives branch migration. In the full resolvosome a probable DNA-RuvA(4)-RuvB(12)-RuvC(2) complex forms which resolves the HJ.

Its subcellular location is the cytoplasm. The RuvA-RuvB-RuvC complex processes Holliday junction (HJ) DNA during genetic recombination and DNA repair, while the RuvA-RuvB complex plays an important role in the rescue of blocked DNA replication forks via replication fork reversal (RFR). RuvA specifically binds to HJ cruciform DNA, conferring on it an open structure. The RuvB hexamer acts as an ATP-dependent pump, pulling dsDNA into and through the RuvAB complex. HJ branch migration allows RuvC to scan DNA until it finds its consensus sequence, where it cleaves and resolves the cruciform DNA. The protein is Holliday junction branch migration complex subunit RuvA of Mycolicibacterium gilvum (strain PYR-GCK) (Mycobacterium gilvum (strain PYR-GCK)).